A 166-amino-acid polypeptide reads, in one-letter code: Small ribosomal subunit protein uS5 (166 aa).

One can recognise an S5 DRBM domain in the interval 11–74 (LIEKLVSVKR…ENAKKNMVSV (64 aa)).

It belongs to the universal ribosomal protein uS5 family. In terms of assembly, part of the 30S ribosomal subunit. Contacts proteins S4 and S8.

Functionally, with S4 and S12 plays an important role in translational accuracy. In terms of biological role, located at the back of the 30S subunit body where it stabilizes the conformation of the head with respect to the body. In Francisella tularensis subsp. tularensis (strain FSC 198), this protein is Small ribosomal subunit protein uS5.